The following is a 93-amino-acid chain: MKAERLEMLLLCVYRLGYILPVDVCIKIISVAQVSVQGRSTYSCKRRARSIGRCWRCYRVYPPVCNSKCDNRTCRPGISPNFKVVTFIRGWSN.

Positions 44–47 (CKRR) are basic. Residues 54-69 (CWRCYRVYPPVCNSKC) form a C4-type zinc finger.

This sequence belongs to the carlaviruses nucleic acid-binding protein family.

Suppressor of viral-induced RNA silencing. The potential mechanism of action is based on sequestering siRNAs. In Solanum tuberosum (Potato), this protein is RNA silencing suppressor.